The chain runs to 209 residues: Na(+)-translocating NADH-quinone reductase subunit D (209 aa).

Transmembrane regions (helical) follow at residues valine 42–isoleucine 62, isoleucine 66–valine 86, phenylalanine 95–methionine 115, phenylalanine 131–leucine 151, and asparagine 178–leucine 198.

Belongs to the NqrDE/RnfAE family. In terms of assembly, composed of six subunits; NqrA, NqrB, NqrC, NqrD, NqrE and NqrF.

It localises to the cell inner membrane. The catalysed reaction is a ubiquinone + n Na(+)(in) + NADH + H(+) = a ubiquinol + n Na(+)(out) + NAD(+). NQR complex catalyzes the reduction of ubiquinone-1 to ubiquinol by two successive reactions, coupled with the transport of Na(+) ions from the cytoplasm to the periplasm. NqrA to NqrE are probably involved in the second step, the conversion of ubisemiquinone to ubiquinol. This is Na(+)-translocating NADH-quinone reductase subunit D from Serratia proteamaculans (strain 568).